Reading from the N-terminus, the 129-residue chain is MTTDVIADMLTRIRNANQRYLKTVSVPSSKVKLEIARILKEEGFISNFTVEGDVKKTINIELKYQGKTRVIQGLKKISKPGLRVYAQANEIPQVLNGLGISIVSTSQGIMTGKKARLANAGGEVLAFIW.

Belongs to the universal ribosomal protein uS8 family. As to quaternary structure, part of the 30S ribosomal subunit. Contacts proteins S5 and S12.

Functionally, one of the primary rRNA binding proteins, it binds directly to 16S rRNA central domain where it helps coordinate assembly of the platform of the 30S subunit. The chain is Small ribosomal subunit protein uS8 from Mycoplasma mycoides subsp. mycoides SC (strain CCUG 32753 / NCTC 10114 / PG1).